The sequence spans 326 residues: Undecaprenyl-diphosphatase (326 aa).

9 helical membrane passes run 11–31 (AFSL…IAVA), 42–62 (TGVI…LGFI), 90–110 (GVAF…WYFW), 138–158 (LGIG…KLLV), 165–185 (FFRS…LLAL), 212–232 (ALAL…GLFI), 242–262 (FSFL…LKGL), 272–292 (ILPL…AIAW), and 304–324 (IFVW…GMGF).

The protein belongs to the UppP family.

The protein localises to the cell inner membrane. The catalysed reaction is di-trans,octa-cis-undecaprenyl diphosphate + H2O = di-trans,octa-cis-undecaprenyl phosphate + phosphate + H(+). Functionally, catalyzes the dephosphorylation of undecaprenyl diphosphate (UPP). Confers resistance to bacitracin. This is Undecaprenyl-diphosphatase from Synechocystis sp. (strain ATCC 27184 / PCC 6803 / Kazusa).